Reading from the N-terminus, the 142-residue chain is Trafficking protein particle complex subunit 1 (142 aa).

The protein belongs to the TRAPP small subunits family. BET5 subfamily. Part of the multisubunit TRAPP (transport protein particle) complex.

It is found in the golgi apparatus. It localises to the cis-Golgi network. The protein resides in the endoplasmic reticulum. May play a role in vesicular transport from endoplasmic reticulum to Golgi. This is Trafficking protein particle complex subunit 1 (trappc1-1) from Dictyostelium discoideum (Social amoeba).